The sequence spans 188 residues: Probable RNA 2'-phosphotransferase (188 aa).

Belongs to the KptA/TPT1 family.

Functionally, removes the 2'-phosphate from RNA via an intermediate in which the phosphate is ADP-ribosylated by NAD followed by a presumed transesterification to release the RNA and generate ADP-ribose 1''-2''-cyclic phosphate (APPR&gt;P). May function as an ADP-ribosylase. The polypeptide is Probable RNA 2'-phosphotransferase (Lacticaseibacillus paracasei (strain ATCC 334 / BCRC 17002 / CCUG 31169 / CIP 107868 / KCTC 3260 / NRRL B-441) (Lactobacillus paracasei)).